The following is a 349-amino-acid chain: Anthranilate phosphoribosyltransferase (349 aa).

Residues G94, 97 to 98 (GD), T102, 104 to 107 (NIST), 122 to 130 (KHGNRSVSS), and S134 contribute to the 5-phospho-alpha-D-ribose 1-diphosphate site. G94 contacts anthranilate. S106 serves as a coordination point for Mg(2+). N125 is an anthranilate binding site. R180 is a binding site for anthranilate. Mg(2+) contacts are provided by D239 and E240.

It belongs to the anthranilate phosphoribosyltransferase family. Homodimer. The cofactor is Mg(2+).

It carries out the reaction N-(5-phospho-beta-D-ribosyl)anthranilate + diphosphate = 5-phospho-alpha-D-ribose 1-diphosphate + anthranilate. It functions in the pathway amino-acid biosynthesis; L-tryptophan biosynthesis; L-tryptophan from chorismate: step 2/5. Catalyzes the transfer of the phosphoribosyl group of 5-phosphorylribose-1-pyrophosphate (PRPP) to anthranilate to yield N-(5'-phosphoribosyl)-anthranilate (PRA). This is Anthranilate phosphoribosyltransferase from Trichlorobacter lovleyi (strain ATCC BAA-1151 / DSM 17278 / SZ) (Geobacter lovleyi).